Consider the following 360-residue polypeptide: Protein Wnt-2 (360 aa).

The first 25 residues, 1 to 25 (MNSPLRGIWLWLPLLLTWLTPEVSS), serve as a signal peptide directing secretion. Intrachain disulfides connect Cys-76–Cys-87, Cys-127–Cys-135, Cys-137–Cys-157, Cys-206–Cys-220, Cys-208–Cys-215, Cys-278–Cys-309, Cys-294–Cys-304, Cys-308–Cys-348, Cys-324–Cys-339, Cys-326–Cys-336, and Cys-331–Cys-332. The O-palmitoleoyl serine; by PORCN moiety is linked to residue Ser-212. Asn-295 carries N-linked (GlcNAc...) asparagine glycosylation.

Belongs to the Wnt family. Post-translationally, palmitoleoylation is required for efficient binding to frizzled receptors. Depalmitoleoylation leads to Wnt signaling pathway inhibition.

The protein localises to the secreted. It localises to the extracellular space. The protein resides in the extracellular matrix. Its function is as follows. Ligand for members of the frizzled family of seven transmembrane receptors. Functions in the canonical Wnt signaling pathway that results in activation of transcription factors of the TCF/LEF family. Functions as a upstream regulator of FGF10 expression. Plays an important role in embryonic lung development. May contribute to embryonic brain development by regulating the proliferation of dopaminergic precursors and neurons. The polypeptide is Protein Wnt-2 (WNT2) (Callithrix jacchus (White-tufted-ear marmoset)).